A 320-amino-acid polypeptide reads, in one-letter code: Small ribosomal subunit protein uS15m (320 aa).

2 disordered regions span residues 37 to 60 (NISQ…AQQR) and 214 to 242 (QSLE…DTGS).

Belongs to the universal ribosomal protein uS15 family. In terms of assembly, component of the mitochondrial small ribosomal subunit (mt-SSU). Mature N.crassa 74S mitochondrial ribosomes consist of a small (37S) and a large (54S) subunit. The 37S small subunit contains a 16S ribosomal RNA (16S mt-rRNA) and 32 different proteins. The 54S large subunit contains a 23S rRNA (23S mt-rRNA) and 42 different proteins.

It localises to the mitochondrion. Its function is as follows. Component of the mitochondrial ribosome (mitoribosome), a dedicated translation machinery responsible for the synthesis of mitochondrial genome-encoded proteins, including at least some of the essential transmembrane subunits of the mitochondrial respiratory chain. The mitoribosomes are attached to the mitochondrial inner membrane and translation products are cotranslationally integrated into the membrane. This is Small ribosomal subunit protein uS15m (mrps28) from Neurospora crassa (strain ATCC 24698 / 74-OR23-1A / CBS 708.71 / DSM 1257 / FGSC 987).